Reading from the N-terminus, the 116-residue chain is Large ribosomal subunit protein uL18 (116 aa).

This sequence belongs to the universal ribosomal protein uL18 family. In terms of assembly, part of the 50S ribosomal subunit; part of the 5S rRNA/L5/L18/L25 subcomplex. Contacts the 5S and 23S rRNAs.

Its function is as follows. This is one of the proteins that bind and probably mediate the attachment of the 5S RNA into the large ribosomal subunit, where it forms part of the central protuberance. The chain is Large ribosomal subunit protein uL18 from Psychrobacter arcticus (strain DSM 17307 / VKM B-2377 / 273-4).